Consider the following 240-residue polypeptide: Ribosomal RNA small subunit methyltransferase G (240 aa).

S-adenosyl-L-methionine contacts are provided by residues G79, F84, 130-131, and R149; that span reads AE.

This sequence belongs to the methyltransferase superfamily. RNA methyltransferase RsmG family.

Its subcellular location is the cytoplasm. Specifically methylates the N7 position of a guanine in 16S rRNA. In Lactobacillus helveticus (strain DPC 4571), this protein is Ribosomal RNA small subunit methyltransferase G.